Reading from the N-terminus, the 1013-residue chain is Putative helicase mov-10-B.1 (1013 aa).

Composition is skewed to polar residues over residues 91 to 103 and 113 to 123; these read QWSR…QNHA and RPSTTRVSDPS. The disordered stretch occupies residues 91–129; sequence QWSRPYRSQQNHATPHLNDAISRPSTTRVSDPSSVPEPE. 550-557 contacts ATP; that stretch reads GPPGTGKT. The DEAG box signature appears at 672-675; the sequence is DEAG.

Belongs to the DNA2/NAM7 helicase family. SDE3 subfamily.

It is found in the cytoplasm. It localises to the P-body. The catalysed reaction is ATP + H2O = ADP + phosphate + H(+). Its function is as follows. Probable RNA helicase. Required for RNA-mediated gene silencing by the RNA-induced silencing complex (RISC). Required for both miRNA-mediated translational repression and miRNA-mediated cleavage of complementary mRNAs by RISC. In Danio rerio (Zebrafish), this protein is Putative helicase mov-10-B.1 (mov10b.1).